Reading from the N-terminus, the 292-residue chain is Ribosomal protein L11 methyltransferase (292 aa).

4 residues coordinate S-adenosyl-L-methionine: T144, G165, D187, and N229.

It belongs to the methyltransferase superfamily. PrmA family.

It localises to the cytoplasm. The enzyme catalyses L-lysyl-[protein] + 3 S-adenosyl-L-methionine = N(6),N(6),N(6)-trimethyl-L-lysyl-[protein] + 3 S-adenosyl-L-homocysteine + 3 H(+). Functionally, methylates ribosomal protein L11. The polypeptide is Ribosomal protein L11 methyltransferase (Pseudomonas putida (strain ATCC 700007 / DSM 6899 / JCM 31910 / BCRC 17059 / LMG 24140 / F1)).